Here is a 531-residue protein sequence, read N- to C-terminus: Transmembrane protein 266 (531 aa).

The Cytoplasmic segment spans residues 1-102 (MALAASFNMT…VFLLSASLNS (102 aa)). A helical membrane pass occupies residues 103-123 (FLVACVILVVILLTLELLIDI). The Extracellular segment spans residues 124-129 (KLLQFS). Residues 130-150 (SAFQFAGVIHWISLVILSVFF) form a helical membrane-spanning segment. The Cytoplasmic portion of the chain corresponds to 151-169 (SETVLRIVVLGIWDYIENK). Residues 170-190 (IEVFDGAVIILSLAPMVASTV) traverse the membrane as a helical segment. Residues 191 to 199 (ANGPRSPWD) are Extracellular-facing. The chain crosses the membrane as a helical span at residues 200 to 220 (AISLIIMLRIWRVKRVIDAYV). Over 221–531 (LPVKLEMEMV…EQKLHRVPEA (311 aa)) the chain is Cytoplasmic. The stretch at 231–251 (IQQYEKAKVIQDEQLERLTQI) forms a coiled coil. Positions 380–477 (NGTGATSESA…PAGSAQTSPE (98 aa)) are disordered. Residues 383–412 (GATSESASRSSVTRAQSDSSQTLGSSTDCS) are compositionally biased toward polar residues. A compositionally biased stretch (pro residues) spans 421-431 (EPGPSPLPLPP).

In terms of assembly, homodimer; disulfide-linked.

The protein localises to the cell membrane. The protein resides in the cell projection. It is found in the dendrite. It localises to the perikaryon. In terms of biological role, voltage-sensor protein present on the post-synaptic side of glutamatergic mossy fibers and granule cells in the cerebellum. Despite the presence of a voltage-sensor segment, does not form a functional ion channel and its precise role remains unclear. Undergoes both rapid and slow structural rearrangements in response to changes in voltage. Contains a zinc-binding site that can regulate the slow conformational transition. The protein is Transmembrane protein 266 of Macaca fascicularis (Crab-eating macaque).